Here is a 217-residue protein sequence, read N- to C-terminus: Adenylate kinase (217 aa).

Gly-10–Thr-15 contributes to the ATP binding site. An NMP region spans residues Ser-30–Val-59. AMP-binding positions include Thr-31, Arg-36, Asp-57–Val-59, Gly-85–Arg-88, and Gln-92. The segment at Gly-126–Asp-163 is LID. An ATP-binding site is contributed by Arg-127. Residues Cys-130 and Cys-133 each contribute to the Zn(2+) site. Residue Thr-136–Tyr-137 coordinates ATP. Positions 150 and 153 each coordinate Zn(2+). AMP-binding residues include Arg-160 and Arg-171. Position 199 (Gln-199) interacts with ATP.

This sequence belongs to the adenylate kinase family. Monomer.

It is found in the cytoplasm. It carries out the reaction AMP + ATP = 2 ADP. The protein operates within purine metabolism; AMP biosynthesis via salvage pathway; AMP from ADP: step 1/1. In terms of biological role, catalyzes the reversible transfer of the terminal phosphate group between ATP and AMP. Plays an important role in cellular energy homeostasis and in adenine nucleotide metabolism. This chain is Adenylate kinase, found in Geobacillus thermodenitrificans (strain NG80-2).